We begin with the raw amino-acid sequence, 262 residues long: 3-methyl-2-oxobutanoate hydroxymethyltransferase (262 aa).

Residues Asp44 and Asp83 each coordinate Mg(2+). Residues 44–45 (DS), Asp83, and Lys112 each bind 3-methyl-2-oxobutanoate. Position 114 (Glu114) interacts with Mg(2+). Glu181 functions as the Proton acceptor in the catalytic mechanism.

It belongs to the PanB family. In terms of assembly, homodecamer; pentamer of dimers. Mg(2+) is required as a cofactor.

Its subcellular location is the cytoplasm. The enzyme catalyses 3-methyl-2-oxobutanoate + (6R)-5,10-methylene-5,6,7,8-tetrahydrofolate + H2O = 2-dehydropantoate + (6S)-5,6,7,8-tetrahydrofolate. Its pathway is cofactor biosynthesis; (R)-pantothenate biosynthesis; (R)-pantoate from 3-methyl-2-oxobutanoate: step 1/2. Functionally, catalyzes the reversible reaction in which hydroxymethyl group from 5,10-methylenetetrahydrofolate is transferred onto alpha-ketoisovalerate to form ketopantoate. The sequence is that of 3-methyl-2-oxobutanoate hydroxymethyltransferase from Thiobacillus denitrificans (strain ATCC 25259 / T1).